The primary structure comprises 290 residues: Phosphoribosylaminoimidazole-succinocarboxamide synthase (290 aa).

It belongs to the SAICAR synthetase family.

It catalyses the reaction 5-amino-1-(5-phospho-D-ribosyl)imidazole-4-carboxylate + L-aspartate + ATP = (2S)-2-[5-amino-1-(5-phospho-beta-D-ribosyl)imidazole-4-carboxamido]succinate + ADP + phosphate + 2 H(+). It functions in the pathway purine metabolism; IMP biosynthesis via de novo pathway; 5-amino-1-(5-phospho-D-ribosyl)imidazole-4-carboxamide from 5-amino-1-(5-phospho-D-ribosyl)imidazole-4-carboxylate: step 1/2. The polypeptide is Phosphoribosylaminoimidazole-succinocarboxamide synthase (purC) (Haemophilus influenzae (strain ATCC 51907 / DSM 11121 / KW20 / Rd)).